Consider the following 389-residue polypeptide: Aromatic-amino-acid aminotransferase 2 (389 aa).

Position 233 is an N6-(pyridoxal phosphate)lysine (Lys233).

Belongs to the class-I pyridoxal-phosphate-dependent aminotransferase family. In terms of assembly, homodimer. Requires pyridoxal 5'-phosphate as cofactor.

The enzyme catalyses an aromatic L-alpha-amino acid + 2-oxoglutarate = an aromatic oxo-acid + L-glutamate. Its function is as follows. Catalyzes the transamination of phenylalanine, tyrosine and tryptophan. Shows virtually no activity towards aspartic acid, alanine, valine or isoleucine. The polypeptide is Aromatic-amino-acid aminotransferase 2 (Thermococcus litoralis (strain ATCC 51850 / DSM 5473 / JCM 8560 / NS-C)).